Consider the following 290-residue polypeptide: Probable 2-(5''-triphosphoribosyl)-3'-dephosphocoenzyme-A synthase (290 aa).

This sequence belongs to the CitG/MdcB family.

It catalyses the reaction 3'-dephospho-CoA + ATP = 2'-(5''-triphospho-alpha-D-ribosyl)-3'-dephospho-CoA + adenine. Its function is as follows. Involved in the formation of 2-(5''-phosphoribosyl)-3'-dephosphocoenzyme-A, the prosthetic group of the acyl-carrier protein of the malonate decarboxylase. The sequence is that of Probable 2-(5''-triphosphoribosyl)-3'-dephosphocoenzyme-A synthase from Stutzerimonas stutzeri (strain A1501) (Pseudomonas stutzeri).